The primary structure comprises 845 residues: Protein P (845 aa).

Residues 1–179 (MPLSYQHFRK…FCGSPYSWEQ (179 aa)) form a terminal protein domain (TP) region. A spacer region spans residues 180-348 (ELQHGRLVIK…YCLSHLVNLR (169 aa)). Positions 226 to 246 (GLQPHQGPLASSQPGRSGSIR) are disordered. Residues 349–692 (EDRGPCDEHG…YMNLYPVARQ (344 aa)) are polymerase/reverse transcriptase domain (RT). The region spanning 359–602 (EHHIRIPRTP…YSLNFMGYVI (244 aa)) is the Reverse transcriptase domain. Asp431, Asp553, and Asp554 together coordinate Mg(2+).

Belongs to the hepadnaviridae P protein family.

It catalyses the reaction DNA(n) + a 2'-deoxyribonucleoside 5'-triphosphate = DNA(n+1) + diphosphate. The enzyme catalyses Endonucleolytic cleavage to 5'-phosphomonoester.. Activated by host HSP70 and HSP40 in vitro to be able to bind the epsilon loop of the pgRNA. Because deletion of the RNase H region renders the protein partly chaperone-independent, the chaperones may be needed indirectly to relieve occlusion of the RNA-binding site by this domain. Inhibited by several reverse-transcriptase inhibitors: Lamivudine, Adefovir and Entecavir. Its function is as follows. Multifunctional enzyme that converts the viral RNA genome into dsDNA in viral cytoplasmic capsids. This enzyme displays a DNA polymerase activity that can copy either DNA or RNA templates, and a ribonuclease H (RNase H) activity that cleaves the RNA strand of RNA-DNA heteroduplexes in a partially processive 3'- to 5'-endonucleasic mode. Neo-synthesized pregenomic RNA (pgRNA) are encapsidated together with the P protein, and reverse-transcribed inside the nucleocapsid. Initiation of reverse-transcription occurs first by binding the epsilon loop on the pgRNA genome, and is initiated by protein priming, thereby the 5'-end of (-)DNA is covalently linked to P protein. Partial (+)DNA is synthesized from the (-)DNA template and generates the relaxed circular DNA (RC-DNA) genome. After budding and infection, the RC-DNA migrates in the nucleus, and is converted into a plasmid-like covalently closed circular DNA (cccDNA). The activity of P protein does not seem to be necessary for cccDNA generation, and is presumably released from (+)DNA by host nuclear DNA repair machinery. This chain is Protein P, found in Hepatitis B virus genotype A2 subtype adw2 (isolate Germany/991/1990) (HBV-A).